The sequence spans 611 residues: ATP-dependent zinc metalloprotease FtsH 1 (611 aa).

Residues 1 to 6 (MNDNNK) are Cytoplasmic-facing. The chain crosses the membrane as a helical span at residues 7 to 27 (IIRSMVLYLLIFIAIYAMVQL). At 28-107 (YSQSTEPITD…KSEPQVGPPW (80 aa)) the chain is on the extracellular side. A helical transmembrane segment spans residues 108-128 (WVQMLPSLFLIVIFIIFWYIF). Residue 124-131 (FWYIFMQQ) participates in ATP binding. At 129 to 611 (MQQAQGGGGS…GEDIEGVQFA (483 aa)) the chain is on the cytoplasmic side. H423 provides a ligand contact to Zn(2+). E424 is a catalytic residue. Residues H427 and D499 each contribute to the Zn(2+) site.

It in the central section; belongs to the AAA ATPase family. The protein in the C-terminal section; belongs to the peptidase M41 family. In terms of assembly, homohexamer. Zn(2+) serves as cofactor.

Its subcellular location is the cell membrane. Acts as a processive, ATP-dependent zinc metallopeptidase for both cytoplasmic and membrane proteins. Plays a role in the quality control of integral membrane proteins. The chain is ATP-dependent zinc metalloprotease FtsH 1 from Thermoanaerobacter sp. (strain X514).